Reading from the N-terminus, the 1396-residue chain is DNA-directed RNA polymerase subunit beta' (1396 aa).

Zn(2+)-binding residues include Cys-72, Cys-74, Cys-87, and Cys-90. 3 residues coordinate Mg(2+): Asp-463, Asp-465, and Asp-467. Residues Cys-814, Cys-889, Cys-896, and Cys-899 each contribute to the Zn(2+) site.

This sequence belongs to the RNA polymerase beta' chain family. The RNAP catalytic core consists of 2 alpha, 1 beta, 1 beta' and 1 omega subunit. When a sigma factor is associated with the core the holoenzyme is formed, which can initiate transcription. Requires Mg(2+) as cofactor. It depends on Zn(2+) as a cofactor.

It catalyses the reaction RNA(n) + a ribonucleoside 5'-triphosphate = RNA(n+1) + diphosphate. In terms of biological role, DNA-dependent RNA polymerase catalyzes the transcription of DNA into RNA using the four ribonucleoside triphosphates as substrates. The polypeptide is DNA-directed RNA polymerase subunit beta' (Chlamydia muridarum (strain MoPn / Nigg)).